The sequence spans 386 residues: Probable Xaa-Pro aminopeptidase PMAA_074180 (386 aa).

Mn(2+)-binding residues include aspartate 160, aspartate 171, glutamate 311, and glutamate 350.

It belongs to the peptidase M24B family. Mn(2+) is required as a cofactor.

The catalysed reaction is Release of any N-terminal amino acid, including proline, that is linked to proline, even from a dipeptide or tripeptide.. Functionally, catalyzes the removal of a penultimate prolyl residue from the N-termini of peptides. The sequence is that of Probable Xaa-Pro aminopeptidase PMAA_074180 from Talaromyces marneffei (strain ATCC 18224 / CBS 334.59 / QM 7333) (Penicillium marneffei).